The following is a 348-amino-acid chain: Dihydroorotase (348 aa).

Residues His-17 and His-19 each coordinate Zn(2+). Residues 19–21 and Asn-45 contribute to the substrate site; that span reads HLR. Zn(2+) contacts are provided by Lys-103, His-140, and His-178. Lys-103 is subject to N6-carboxylysine. His-140 provides a ligand contact to substrate. Position 223 (Leu-223) interacts with substrate. Residue Asp-251 participates in Zn(2+) binding. Residue Asp-251 is part of the active site. Residues His-255 and Ala-267 each coordinate substrate.

This sequence belongs to the metallo-dependent hydrolases superfamily. DHOase family. Class II DHOase subfamily. As to quaternary structure, homodimer. Requires Zn(2+) as cofactor.

The catalysed reaction is (S)-dihydroorotate + H2O = N-carbamoyl-L-aspartate + H(+). It participates in pyrimidine metabolism; UMP biosynthesis via de novo pathway; (S)-dihydroorotate from bicarbonate: step 3/3. Functionally, catalyzes the reversible cyclization of carbamoyl aspartate to dihydroorotate. The polypeptide is Dihydroorotase (Yersinia pseudotuberculosis serotype O:1b (strain IP 31758)).